Consider the following 266-residue polypeptide: Diphthine synthase (266 aa).

S-adenosyl-L-methionine is bound by residues L9, D84, V87, 112 to 113 (SI), L169, A210, and H235.

This sequence belongs to the diphthine synthase family. In terms of assembly, homodimer.

The catalysed reaction is 2-[(3S)-amino-3-carboxypropyl]-L-histidyl-[translation elongation factor 2] + 3 S-adenosyl-L-methionine = diphthine-[translation elongation factor 2] + 3 S-adenosyl-L-homocysteine + 3 H(+). It participates in protein modification; peptidyl-diphthamide biosynthesis. In terms of biological role, S-adenosyl-L-methionine-dependent methyltransferase that catalyzes the trimethylation of the amino group of the modified target histidine residue in translation elongation factor 2 (EF-2), to form an intermediate called diphthine. The three successive methylation reactions represent the second step of diphthamide biosynthesis. This Methanosarcina barkeri (strain Fusaro / DSM 804) protein is Diphthine synthase.